The following is a 224-amino-acid chain: Probable septum site-determining protein MinC (224 aa).

The protein belongs to the MinC family. Interacts with MinD and FtsZ.

Cell division inhibitor that blocks the formation of polar Z ring septums. Rapidly oscillates between the poles of the cell to destabilize FtsZ filaments that have formed before they mature into polar Z rings. Prevents FtsZ polymerization. This is Probable septum site-determining protein MinC from Shewanella amazonensis (strain ATCC BAA-1098 / SB2B).